A 223-amino-acid chain; its full sequence is Glycoprotein 42 (223 aa).

Over 1–8 the chain is Intravirion; the sequence is MVSFKQVR. A helical transmembrane segment spans residues 9–29; that stretch reads VPLFTAIALVIVLLLAYFLPP. The Virion surface segment spans residues 30-223; that stretch reads RVRGGGRVAA…CLCVSQRSNS (194 aa). 5 disulfides stabilise this stretch: Cys99–Cys138, Cys102–Cys115, Cys128–Cys214, Cys132–Cys216, and Cys192–Cys208. The C-type lectin domain maps to 111 to 217; it reads YKGCCFYFTK…CSFLKPCLCV (107 aa).

The protein belongs to the epstein barr virus gp42 family. In terms of assembly, forms a complex with gp25 and gp85 via its N-terminus; this complex is used for invasion of B-lymphocytes. Interacts with human HLA-DRA and HLA-DRB1.

The protein resides in the virion membrane. Its subcellular location is the host membrane. In terms of biological role, plays a role in virion attachment to host B-lymphocytes, through binding to leukocyte antigen (HLA) class II and subsequently participates in fusion of the virion with host membranes. May act as a tropism switch that directs fusion with B-lymphocytes and inhibits fusion with epithelial cells. Additionally, hampers T-cell recognition via HLA class II molecules through steric hindrance of T-cell receptor-class II-peptide interaction. Soluble gp42 inhibits HLA class II-restricted antigen presentation to T-cells through binding to immature and mature HLA class II complexes. This is Glycoprotein 42 from Epstein-Barr virus (strain B95-8) (HHV-4).